The primary structure comprises 517 residues: Forkhead box protein N4 (517 aa).

The fork-head DNA-binding region spans 193–289 (KPIYSYSCLI…EEMHKWKRKD (97 aa)). Disordered regions lie at residues 365–398 (VQPQ…LPHP) and 497–517 (SGTS…IALL).

The protein localises to the nucleus. Functionally, transcription factor essential for neural and some non-neural tissues development, such as retina and lung respectively. Binds to an 11-bp consensus sequence containing the invariant tetranucleotide 5'-ACGC-3'. During development of the central nervous system, is required to specify the amacrine and horizontal cell fates from multipotent retinal progenitors while suppressing the alternative photoreceptor cell fates through activating DLL4-NOTCH signaling. Also acts synergistically with ASCL1/MASH1 to activate DLL4-NOTCH signaling and drive commitment of p2 progenitors to the V2b interneuron fates during spinal cord neurogenesis. In development of non-neural tissues, plays an essential role in the specification of the atrioventricular canal and is indirectly required for patterning the distal airway during lung development. The chain is Forkhead box protein N4 (FOXN4) from Homo sapiens (Human).